The following is a 255-amino-acid chain: Transmembrane protein 81 (255 aa).

The N-terminal stretch at 1-30 (MKVLATSFVLGSLGLAFYLPLVVTTPKTLA) is a signal peptide. Topologically, residues 31 to 226 (IPEKLQEAVG…HPKWKKKVAS (196 aa)) are extracellular. An N-linked (GlcNAc...) asparagine glycan is attached at N45. The 89-residue stretch at 83–171 (TNWICGMLHF…VQLVKNLRLV (89 aa)) folds into the Ig-like domain. An intrachain disulfide couples C104 to C160. The helical transmembrane segment at 227–247 (ALGIGIAIGVVGGVLVRIVLC) threads the bilayer. Topologically, residues 248-255 (ALRGGLQQ) are cytoplasmic.

In terms of assembly, forms a complex with IZUMO1 and SPACA6 on spermatocyte cell membrane required for fertilization. Highly expressed in sperm (at protein level).

It is found in the cell membrane. Functionally, essential fertilization factor required for male fertility. Part of a conserved trimeric sperm complex with the essential fertilization factors IZUMO1 and SPACA6 which bridges sperm and oocyte membranes during fertilization by binding to IZUMO1R/JUNO on the oocyte. The polypeptide is Transmembrane protein 81 (Homo sapiens (Human)).